The following is a 325-amino-acid chain: MTKSQQKVSSIEKLSNQEGIISALAFDQRGALKRMMAEHQSETPTVEQIEQLKVLVSEELTQYASSILLDPEYGLPASDARNNDCGLLLAYEKTGYDVNAKGRLPDCLVEWSAKRLKEQGANAVKFLLYYDVDDTEEINIQKKAYIERIGSECVAEDIPFFLEVLTYDDNIPDNKSAEFAKVKPRKVNEAMKLFSEDRFNVDVLKVEVPVNMNFVEGFSEGEVVYTKEEAAQHFRDQDAATHLPYIYLSAGVSAELFQDTLKFAHDSGAQFNGVLCGRATWSGAVKVYIEEGEQAAREWLRTVGFKNIDDLNTVLKTTATSWKNK.

The protein belongs to the aldolase LacD family.

The catalysed reaction is D-tagatofuranose 1,6-bisphosphate = D-glyceraldehyde 3-phosphate + dihydroxyacetone phosphate. It participates in carbohydrate metabolism; D-tagatose 6-phosphate degradation; D-glyceraldehyde 3-phosphate and glycerone phosphate from D-tagatose 6-phosphate: step 2/2. The protein is Tagatose 1,6-diphosphate aldolase of Staphylococcus epidermidis (strain ATCC 35984 / DSM 28319 / BCRC 17069 / CCUG 31568 / BM 3577 / RP62A).